The primary structure comprises 1521 residues: MDVVNSTARAAVTSATAVTAVTGTGDRHPNPLSSAVAAASDVANAHGSSSWLGLFARVVLWLLQFVSMVLYYAIKLATISVPTLLYTLFSTSLTVTMNATTLMLIVAAMIGAISWVVRYRYLNMYSRLPPEPQRKEPDVDLFPDTHEEGIKSGLSNYFDEFLSAIKIFGYLERPVFHELTRSMQTRKLIAGESFNLEEEKGFCLVVDGLVEIFVKSSSYNRRYPHGPYFSPNSEAPSSDDEHPAPGQQRYQLLTEVRNGAPMSSLFSIMSLFTEDVPLRHADEDNSEPGTTTHSGLFPNYPASADFRKSRVRMDSVPNTPQMDASASSSANNLPGQLDRGLPHVPPISLDGTGFSKPQRPVPKRSNTTSAHPDIIARATVDTTVAIIPASAFRRLIKIYPKATAHIVHVILSRFQRVTLATAYNYLGLTNEVLQIERQMLKYTTQQLPNHLRGDALDRLKEKFKREVERMGEEDDVSKGIALHNARAGRRRRSTATLRKEAALQAFSKQRNISSMSGSSLAIPNAGDLVTHLQQSRGGGNRAQSVAFTDGPSPHLDVEREAVSPLAQRTFDPFVTPRSIHVALEKRETLDEDNLFRESILECMFRSIGLTGSGGSNKDADSNQASPRLISFDQRRQKALYTNHAFGFMDGLDGSADGDTESITSAGLSLPASPNPQFLAQEMRDEMEIVFFPKGSVLVEQGERNPGLYYVVDGFLDICTQEDAAASDVVHPTSRTSLHAMDSAQSIRSPQRSPQPFAESMRSGNKVDDAEIKSKPNRRSVALIKPGGLAGYVGTISSYRSFIEVVAKTDVYVGFLPLTSIERIVDRYPIVLLTMAKRLTNLLPRLILHIDFALEWLQVNAGQVIFHEGDESEAIYIVLNGRLRLVEDRKDGGMNVKAEYGQGESIGELEVLTETSRSGTLHAIRDTELVKFPRTLFNSLAQEHPNITIKISKIIASRMRALIDDPSTMLGIKDSSGRSSINKSSTTLNLRTVAVLPVSAGVPVVEFSNRLLSALTEVGAPNGATSLNSAAVLNHLGKHAFNRMGKLKLSQYLADLEEKYGLVIYVADTNVNAPWTQTCVAQADCVLMVGLADGSPEIGEYERFMLGMKSTARKILVLLHQERYSNSGLTRKWLKNRVWINGGHFHVQMTYSPNAVPIHPPAKPSGPTLRERVQILQAEIQKYTSRKVRHSPFYSPDAPFKGDFHRLARRLCGKSVGLVLGGGGARGIAQIGIIRAMQEAGIPIDIVGGTSIGAFIGALYARHADFVPIVNAAKKFSGRMASMWRFALDLTYPSASYTTGHEFNRGIFKAFGNTQIEDFWLDYYCNTTNISKSRAEFHTSGYAWWYVRASMSLAGLLLPLCDEGSMLLDGGYVDNLTVSHMKSLGSDVIFAVDVGALDDNTPQAFGDSLSGMWAFFNRWNPFSSVANPPTLAEIQARLAYVSSVDALERAKTLPGCIYMRPPIEEYGTLDFGKFMEIYGVGYKYGQEFLAKLRERGGVLPIGEEMGGKKGLRRTMAPRRASI.

The Cytoplasmic segment spans residues 1–50 (MDVVNSTARAAVTSATAVTAVTGTGDRHPNPLSSAVAAASDVANAHGSSS). The helical transmembrane segment at 51–71 (WLGLFARVVLWLLQFVSMVLY) threads the bilayer. Topologically, residues 72-96 (YAIKLATISVPTLLYTLFSTSLTVT) are lumenal. Residues 97-117 (MNATTLMLIVAAMIGAISWVV) form a helical membrane-spanning segment. Residues 118–1521 (RYRYLNMYSR…RTMAPRRASI (1404 aa)) lie on the Cytoplasmic side of the membrane. 3 disordered regions span residues 280-301 (HADE…PNYP), 315-372 (SVPN…SAHP), and 738-768 (HAMD…KVDD). Composition is skewed to polar residues over residues 316-334 (VPNT…NNLP) and 738-753 (HAMD…QRSP). A nucleoside 3',5'-cyclic phosphate contacts are provided by residues 670–789 (PASP…GGLA) and 837–957 (RLTN…IASR). The PNPLA domain maps to 1217–1381 (LVLGGGGARG…VDNLTVSHMK (165 aa)). The short motif at 1221–1226 (GGGARG) is the GXGXXG element. Positions 1248 to 1252 (GTSIG) match the GXSXG motif. Serine 1250 functions as the Nucleophile in the catalytic mechanism. The active-site Proton acceptor is aspartate 1368. A DGA/G motif is present at residues 1368–1370 (DGG).

Belongs to the NTE family.

The protein resides in the endoplasmic reticulum membrane. It catalyses the reaction a 1-acyl-sn-glycero-3-phosphocholine + H2O = sn-glycerol 3-phosphocholine + a fatty acid + H(+). With respect to regulation, inhibited by organophosphorus esters. In terms of biological role, intracellular phospholipase B that catalyzes the double deacylation of phosphatidylcholine (PC) to glycerophosphocholine (GroPCho). Plays an important role in membrane lipid homeostasis. Responsible for the rapid PC turnover in response to inositol, elevated temperatures, or when choline is present in the growth medium. The chain is Lysophospholipase NTE1 (NTE1) from Chaetomium globosum (strain ATCC 6205 / CBS 148.51 / DSM 1962 / NBRC 6347 / NRRL 1970) (Soil fungus).